We begin with the raw amino-acid sequence, 396 residues long: Acetate kinase (396 aa).

Asn7 serves as a coordination point for Mg(2+). Lys14 contacts ATP. Arg88 is a binding site for substrate. Catalysis depends on Asp145, which acts as the Proton donor/acceptor. ATP-binding positions include His205–Gly209, Asp279–Arg281, and Gly327–Asn331. Glu381 is a binding site for Mg(2+).

This sequence belongs to the acetokinase family. In terms of assembly, homodimer. Mg(2+) is required as a cofactor. The cofactor is Mn(2+).

Its subcellular location is the cytoplasm. The enzyme catalyses acetate + ATP = acetyl phosphate + ADP. The protein operates within metabolic intermediate biosynthesis; acetyl-CoA biosynthesis; acetyl-CoA from acetate: step 1/2. In terms of biological role, catalyzes the formation of acetyl phosphate from acetate and ATP. Can also catalyze the reverse reaction. The chain is Acetate kinase from Campylobacter jejuni subsp. doylei (strain ATCC BAA-1458 / RM4099 / 269.97).